Reading from the N-terminus, the 379-residue chain is (R)-2-hydroxyglutaryl-CoA dehydratase, subunit beta (379 aa).

It belongs to the FldB/FldC dehydratase alpha/beta subunit family. In terms of assembly, the (R)-2-hydroxyglutaryl-CoA dehydratase enzyme system is a heterodimer composed of an alpha subunit (HgdA) and a beta subunit (HgdB). It depends on [4Fe-4S] cluster as a cofactor. FMN serves as cofactor. Mg(2+) is required as a cofactor.

It localises to the cytoplasm. It carries out the reaction (R)-2-hydroxyglutaryl-CoA = (2E)-glutaconyl-CoA + H2O. It functions in the pathway amino-acid degradation; L-glutamate degradation via hydroxyglutarate pathway; crotonoyl-CoA from L-glutamate: step 4/5. With respect to regulation, activated by the HgdC. Reversibly inactivated by oxidants such as 2-nitrophenol, 3-nitrophenol, 4-nitrophenol, 4-nitrobenzoate, carbonyl cyanide 4-(trifluoromethoxy)phenylhydrazone (FCCP) and chloramphenicol. Irreversibly inactivated by oxidants such as hydroxylamine and nitrite. In terms of biological role, involved in the fermentation of L-glutamate via the hydroxyglutarate pathway. Catalyzes the reversible syn-elimination of water from (R)-2-hydroxyglutaryl-CoA to yield (E)-glutaconyl-CoA. The dehydration mechanism involves a transient one electron reduction of the thioester from (R)-2-hydroxyglutaryl-CoA, generating a ketyl radical. Prior to (E)-glutaconyl-CoA formation, the ketyl radical is subsequently reoxidized by electron transfer back to the HgdA-HgdB complex (CompD) to avoid change in oxidation state of the substrate. The appropriate redox state of dehydratase HgdA-HgdB complex (CompD) is maintained by HgdC (CompA) via hydrolysis of ATP and ATP-dependent electron transfer. Since the electron is recycled, the dehydratase is able to perform several turnovers with only catalytic amounts of ATP and substoichiometric amounts of HgdC (CompA). This chain is (R)-2-hydroxyglutaryl-CoA dehydratase, subunit beta, found in Acidaminococcus fermentans (strain ATCC 25085 / DSM 20731 / CCUG 9996 / CIP 106432 / VR4).